We begin with the raw amino-acid sequence, 457 residues long: Bifunctional protein GlmU (457 aa).

Positions 1–229 (MSNSAKSVVI…HSEMEGVNNR (229 aa)) are pyrophosphorylase. UDP-N-acetyl-alpha-D-glucosamine contacts are provided by residues 11-14 (LAAG), K25, Q76, 81-82 (GT), 103-105 (YGD), G140, E154, N169, and N227. D105 provides a ligand contact to Mg(2+). Residue N227 participates in Mg(2+) binding. The interval 230–250 (LQLAALERIYQTEQAERLLLE) is linker. The segment at 251-457 (GVMLLDPARF…GWKRPVKKKQ (207 aa)) is N-acetyltransferase. The UDP-N-acetyl-alpha-D-glucosamine site is built by R333 and K351. The active-site Proton acceptor is the H363. Residues Y366 and N377 each contribute to the UDP-N-acetyl-alpha-D-glucosamine site. Residues A380, 386-387 (NY), S405, A423, and R440 each bind acetyl-CoA.

In the N-terminal section; belongs to the N-acetylglucosamine-1-phosphate uridyltransferase family. This sequence in the C-terminal section; belongs to the transferase hexapeptide repeat family. Homotrimer. Requires Mg(2+) as cofactor.

The protein localises to the cytoplasm. It carries out the reaction alpha-D-glucosamine 1-phosphate + acetyl-CoA = N-acetyl-alpha-D-glucosamine 1-phosphate + CoA + H(+). The catalysed reaction is N-acetyl-alpha-D-glucosamine 1-phosphate + UTP + H(+) = UDP-N-acetyl-alpha-D-glucosamine + diphosphate. It functions in the pathway nucleotide-sugar biosynthesis; UDP-N-acetyl-alpha-D-glucosamine biosynthesis; N-acetyl-alpha-D-glucosamine 1-phosphate from alpha-D-glucosamine 6-phosphate (route II): step 2/2. Its pathway is nucleotide-sugar biosynthesis; UDP-N-acetyl-alpha-D-glucosamine biosynthesis; UDP-N-acetyl-alpha-D-glucosamine from N-acetyl-alpha-D-glucosamine 1-phosphate: step 1/1. The protein operates within bacterial outer membrane biogenesis; LPS lipid A biosynthesis. Catalyzes the last two sequential reactions in the de novo biosynthetic pathway for UDP-N-acetylglucosamine (UDP-GlcNAc). The C-terminal domain catalyzes the transfer of acetyl group from acetyl coenzyme A to glucosamine-1-phosphate (GlcN-1-P) to produce N-acetylglucosamine-1-phosphate (GlcNAc-1-P), which is converted into UDP-GlcNAc by the transfer of uridine 5-monophosphate (from uridine 5-triphosphate), a reaction catalyzed by the N-terminal domain. The protein is Bifunctional protein GlmU of Proteus mirabilis (strain HI4320).